The chain runs to 1022 residues: Protein translocase subunit SecA (1022 aa).

ATP-binding positions include glutamine 143, glycine 161–threonine 165, and aspartate 661. Residues alanine 973–arginine 1001 are disordered. Cysteine 1005, cysteine 1007, cysteine 1016, and histidine 1017 together coordinate Zn(2+).

Belongs to the SecA family. As to quaternary structure, monomer and homodimer. Part of the essential Sec protein translocation apparatus which comprises SecA, SecYEG and auxiliary proteins SecDF. Other proteins may also be involved. It depends on Zn(2+) as a cofactor.

It localises to the cell inner membrane. The protein localises to the cytoplasm. It catalyses the reaction ATP + H2O + cellular proteinSide 1 = ADP + phosphate + cellular proteinSide 2.. In terms of biological role, part of the Sec protein translocase complex. Interacts with the SecYEG preprotein conducting channel. Has a central role in coupling the hydrolysis of ATP to the transfer of proteins into and across the cell membrane, serving as an ATP-driven molecular motor driving the stepwise translocation of polypeptide chains across the membrane. This is Protein translocase subunit SecA from Chlorobium phaeobacteroides (strain DSM 266 / SMG 266 / 2430).